The sequence spans 82 residues: MEHVLGFVALAAGLIIGLGAVGACIGIGIMGSKYLEAAARQPELMNELQTKMFLLAGLIDAAFLIGVGIAMMFAFANPFVLK.

Transmembrane regions (helical) follow at residues 7 to 27 (FVAL…CIGI) and 53 to 73 (FLLA…AMMF).

Belongs to the ATPase C chain family. As to quaternary structure, F-type ATPases have 2 components, F(1) - the catalytic core - and F(0) - the membrane proton channel. F(1) has five subunits: alpha(3), beta(3), gamma(1), delta(1), epsilon(1). F(0) has three main subunits: a(1), b(2) and c(10-14). The alpha and beta chains form an alternating ring which encloses part of the gamma chain. F(1) is attached to F(0) by a central stalk formed by the gamma and epsilon chains, while a peripheral stalk is formed by the delta and b chains.

The protein localises to the cell inner membrane. Its function is as follows. F(1)F(0) ATP synthase produces ATP from ADP in the presence of a proton or sodium gradient. F-type ATPases consist of two structural domains, F(1) containing the extramembraneous catalytic core and F(0) containing the membrane proton channel, linked together by a central stalk and a peripheral stalk. During catalysis, ATP synthesis in the catalytic domain of F(1) is coupled via a rotary mechanism of the central stalk subunits to proton translocation. In terms of biological role, key component of the F(0) channel; it plays a direct role in translocation across the membrane. A homomeric c-ring of between 10-14 subunits forms the central stalk rotor element with the F(1) delta and epsilon subunits. The protein is ATP synthase subunit c of Polaromonas sp. (strain JS666 / ATCC BAA-500).